The chain runs to 449 residues: Tubulin alpha chain (449 aa).

Positions 1-4 (MREC) match the MREC motif motif. Glutamine 11 contributes to the GTP binding site. Lysine 40 carries the post-translational modification N6-acetyllysine. Glutamate 71, serine 140, glycine 144, threonine 145, threonine 179, asparagine 206, and asparagine 228 together coordinate GTP. Glutamate 71 is a Mg(2+) binding site. Glutamate 254 is a catalytic residue. Positions 430–449 (KDYEEVGADSADAEDEGEEY) are disordered. Residues 431-449 (DYEEVGADSADAEDEGEEY) show a composition bias toward acidic residues.

It belongs to the tubulin family. As to quaternary structure, dimer of alpha and beta chains. A typical microtubule is a hollow water-filled tube with an outer diameter of 25 nm and an inner diameter of 15 nM. Alpha-beta heterodimers associate head-to-tail to form protofilaments running lengthwise along the microtubule wall with the beta-tubulin subunit facing the microtubule plus end conferring a structural polarity. Microtubules usually have 13 protofilaments but different protofilament numbers can be found in some organisms and specialized cells. It depends on Mg(2+) as a cofactor. Some glutamate residues at the C-terminus are polyglycylated, resulting in polyglycine chains on the gamma-carboxyl group. Glycylation is mainly limited to tubulin incorporated into axonemes (cilia and flagella) whereas glutamylation is prevalent in neuronal cells, centrioles, axonemes, and the mitotic spindle. Both modifications can coexist on the same protein on adjacent residues, and lowering polyglycylation levels increases polyglutamylation, and reciprocally. The precise function of polyglycylation is still unclear. In terms of processing, some glutamate residues at the C-terminus are polyglutamylated, resulting in polyglutamate chains on the gamma-carboxyl group. Polyglutamylation plays a key role in microtubule severing by spastin (SPAST). SPAST preferentially recognizes and acts on microtubules decorated with short polyglutamate tails: severing activity by SPAST increases as the number of glutamates per tubulin rises from one to eight, but decreases beyond this glutamylation threshold. Post-translationally, acetylation of alpha chains at Lys-40 is located inside the microtubule lumen. This modification has been correlated with increased microtubule stability, intracellular transport and ciliary assembly. Undergoes a tyrosination/detyrosination cycle, the cyclic removal and re-addition of a C-terminal tyrosine residue by the enzymes tubulin tyrosine carboxypeptidase (MATCAP1, VASH1 or VASH2) and tubulin tyrosine ligase (TTL), respectively. In terms of processing, tyrosination promotes microtubule interaction with CAP-Gly microtubule plus-end tracking proteins. Tyrosinated tubulins regulate the initiation of dynein-driven motility. Post-translationally, detyrosination is involved in metaphase plate congression by guiding chromosomes during mitosis. Detyrosination increases microtubules-dependent mechanotransduction in dystrophic cardiac and skeletal muscle. In cardiomyocytes, detyrosinated microtubules are required to resist to contractile compression during contraction.

It is found in the cytoplasm. The protein resides in the cytoskeleton. The enzyme catalyses GTP + H2O = GDP + phosphate + H(+). Its function is as follows. Tubulin is the major constituent of microtubules, a cylinder consisting of laterally associated linear protofilaments composed of alpha- and beta-tubulin heterodimers. Microtubules grow by the addition of GTP-tubulin dimers to the microtubule end, where a stabilizing cap forms. Below the cap, tubulin dimers are in GDP-bound state, owing to GTPase activity of alpha-tubulin. This Xenopus laevis (African clawed frog) protein is Tubulin alpha chain (tuba).